A 212-amino-acid polypeptide reads, in one-letter code: Ribonuclease HII (212 aa).

In terms of domain architecture, RNase H type-2 spans 7 to 212 (SQILGIDEAG…TIENITKSTE (206 aa)). The a divalent metal cation site is built by Asp-13, Glu-14, and Asp-111.

Belongs to the RNase HII family. It depends on Mn(2+) as a cofactor. Mg(2+) is required as a cofactor.

It localises to the cytoplasm. It catalyses the reaction Endonucleolytic cleavage to 5'-phosphomonoester.. Its function is as follows. Endonuclease that specifically degrades the RNA of RNA-DNA hybrids. This is Ribonuclease HII from Methanosphaera stadtmanae (strain ATCC 43021 / DSM 3091 / JCM 11832 / MCB-3).